A 344-amino-acid polypeptide reads, in one-letter code: Aurora kinase B (344 aa).

Positions 1–22 (MAQKENSYPWPYGRQTAPSGLS) are disordered. Threonine 35 is subject to Phosphothreonine. Phosphoserine is present on serine 62. A Phosphothreonine modification is found at threonine 64. Residues 77–327 (FEIGRPLGKG…LAQVSAHPWV (251 aa)) form the Protein kinase domain. ATP-binding positions include 83 to 91 (LGKGKFGNV) and lysine 106. The Proton acceptor role is filled by aspartate 200. The residue at position 215 (lysine 215) is an N6-acetyllysine. Serine 227 carries the phosphoserine modification. Phosphothreonine; by autocatalysis is present on threonine 232.

The protein belongs to the protein kinase superfamily. Ser/Thr protein kinase family. Aurora subfamily. Component of the chromosomal passenger complex (CPC) composed of at least BIRC5/survivin, CDCA8/borealin, INCENP, AURKB or AURKC; predominantly independent AURKB- and AURKC-containing complexes exist. Associates with RACGAP1 during M phase. Interacts with SPDYC; this interaction may be required for proper localization of active, Thr-232-phosphorylated AURKB form during prometaphase and metaphase. Interacts with p53/TP53. Interacts (via the middle kinase domain) with NOC2L (via the N- and C-terminus domains). Interacts with CDCA1. Interacts with EVI5. Interacts with JTB. Interacts with NDC80. Interacts with PSMA3. Interacts with RNF2/RING1B. Interacts with SEPTIN1. Interacts with SIRT2. Interacts with TACC1. Interacts with TTC28. The phosphorylation of Thr-232 requires the binding to INCENP and occurs by means of an autophosphorylation mechanism. Thr-232 phosphorylation is indispensable for the AURKB kinase activity. Post-translationally, acetylated at Lys-215 by KAT5 at kinetochores, increasing AURKB activity and promoting accurate chromosome segregation in mitosis. In terms of processing, ubiquitinated by different BCR (BTB-CUL3-RBX1) E3 ubiquitin ligase complexes. Ubiquitinated by the BCR(KLHL9-KLHL13) E3 ubiquitin ligase complex, ubiquitination leads to removal from mitotic chromosomes and is required for cytokinesis. During anaphase, the BCR(KLHL21) E3 ubiquitin ligase complex recruits the CPC complex from chromosomes to the spindle midzone and mediates the ubiquitination of AURKB. Ubiquitination of AURKB by BCR(KLHL21) E3 ubiquitin ligase complex may not lead to its degradation by the proteasome. Deubiquitinated by USP35; inhibiting CDH1-mediated degradation of AURKB. As to expression, high level expression seen in the thymus. It is also expressed in the spleen, lung, testis, colon, placenta and fetal liver. Expressed during S and G2/M phase and expression is up-regulated in cancer cells during M phase. Not expressed in normal liver, high expression in metastatic liver.

The protein localises to the nucleus. The protein resides in the chromosome. It localises to the centromere. Its subcellular location is the kinetochore. It is found in the cytoplasm. The protein localises to the cytoskeleton. The protein resides in the spindle. It localises to the midbody. The catalysed reaction is L-seryl-[protein] + ATP = O-phospho-L-seryl-[protein] + ADP + H(+). The enzyme catalyses L-threonyl-[protein] + ATP = O-phospho-L-threonyl-[protein] + ADP + H(+). Its activity is regulated as follows. Activity is greatly increased when AURKB is within the CPC complex. In particular, AURKB-phosphorylated INCENP acts as an activator of AURKB. Positive feedback between HASPIN and AURKB contributes to CPC localization. Inhibited by ZM447439. Its function is as follows. Serine/threonine-protein kinase component of the chromosomal passenger complex (CPC), a complex that acts as a key regulator of mitosis. The CPC complex has essential functions at the centromere in ensuring correct chromosome alignment and segregation and is required for chromatin-induced microtubule stabilization and spindle assembly. Involved in the bipolar attachment of spindle microtubules to kinetochores and is a key regulator for the onset of cytokinesis during mitosis. Required for central/midzone spindle assembly and cleavage furrow formation. Key component of the cytokinesis checkpoint, a process required to delay abscission to prevent both premature resolution of intercellular chromosome bridges and accumulation of DNA damage: phosphorylates CHMP4C, leading to retain abscission-competent VPS4 (VPS4A and/or VPS4B) at the midbody ring until abscission checkpoint signaling is terminated at late cytokinesis. AURKB phosphorylates the CPC complex subunits BIRC5/survivin, CDCA8/borealin and INCENP. Phosphorylation of INCENP leads to increased AURKB activity. Other known AURKB substrates involved in centromeric functions and mitosis are CENPA, DES/desmin, GPAF, KIF2C, NSUN2, RACGAP1, SEPTIN1, VIM/vimentin, HASPIN, and histone H3. A positive feedback loop involving HASPIN and AURKB contributes to localization of CPC to centromeres. Phosphorylation of VIM controls vimentin filament segregation in cytokinetic process, whereas histone H3 is phosphorylated at 'Ser-10' and 'Ser-28' during mitosis (H3S10ph and H3S28ph, respectively). AURKB is also required for kinetochore localization of BUB1 and SGO1. Phosphorylation of p53/TP53 negatively regulates its transcriptional activity. Key regulator of active promoters in resting B- and T-lymphocytes: acts by mediating phosphorylation of H3S28ph at active promoters in resting B-cells, inhibiting RNF2/RING1B-mediated ubiquitination of histone H2A and enhancing binding and activity of the USP16 deubiquitinase at transcribed genes. Acts as an inhibitor of CGAS during mitosis: catalyzes phosphorylation of the N-terminus of CGAS during the G2-M transition, blocking CGAS liquid phase separation and activation, and thereby preventing CGAS-induced autoimmunity. Phosphorylates KRT5 during anaphase and telophase. Phosphorylates ATXN10 which promotes phosphorylation of ATXN10 by PLK1 and may play a role in the regulation of cytokinesis and stimulating the proteasomal degradation of ATXN10. The polypeptide is Aurora kinase B (AURKB) (Homo sapiens (Human)).